The following is a 636-amino-acid chain: Chaperone protein HtpG (636 aa).

Residues 1–345 form an a; substrate-binding region; sequence MSESATANAN…SSDLPLNVSR (345 aa). The segment at 346–562 is b; it reads EILQQSKDID…EHDPSGNLAR (217 aa). The segment at 563 to 636 is c; sequence LMKAAGQPMP…NDLMMALSAK (74 aa).

The protein belongs to the heat shock protein 90 family. In terms of assembly, homodimer.

It localises to the cytoplasm. In terms of biological role, molecular chaperone. Has ATPase activity. The chain is Chaperone protein HtpG from Dechloromonas aromatica (strain RCB).